A 159-amino-acid polypeptide reads, in one-letter code: MSDVENQPFFNIQRVYLKDMSLEQPNSPAIFLEQDMPSVEVEVDVKAERLAESVFEVVVSGTVTAKVKDKVAFLIEAKQAGIFDIRNIPDEQLDPLVGIACPTILFPYLRSNIADAITRAGFPPIHLAEINFQALYEQRLAQLQQQAGAAGAPNGTTLN.

It belongs to the SecB family. As to quaternary structure, homotetramer, a dimer of dimers. One homotetramer interacts with 1 SecA dimer.

It localises to the cytoplasm. In terms of biological role, one of the proteins required for the normal export of preproteins out of the cell cytoplasm. It is a molecular chaperone that binds to a subset of precursor proteins, maintaining them in a translocation-competent state. It also specifically binds to its receptor SecA. This Burkholderia vietnamiensis (strain G4 / LMG 22486) (Burkholderia cepacia (strain R1808)) protein is Protein-export protein SecB.